Reading from the N-terminus, the 237-residue chain is MKSFLRKPKFWLLLLGGLSTSSIILSACATPSNSALQAVFKPTSNQFFNGEHGTIQSALNTALRDPETNKKFVAAPLLKALEAWYENNQDKNITQFLKDTKTNVDNQYKTVVDKVVSAPRNKSLFVQQDLLDSSGGSEATWKARKLFEQLISDFASRVFQKNYLSYKENGKVSAGPFLYDTISKNSNWQNIVFDAVNFPETNDDFFAKIQSEVFDQWAEYTDPTIISSVTLKYSAPN.

The signal sequence occupies residues 1 to 27 (MKSFLRKPKFWLLLLGGLSTSSIILSA). Cysteine 28 carries the N-palmitoyl cysteine lipid modification. A lipid anchor (S-diacylglycerol cysteine) is attached at cysteine 28.

Belongs to the MG307/MG309/MG338 family.

The protein resides in the membrane. This is an uncharacterized protein from Mycoplasma pneumoniae (strain ATCC 29342 / M129 / Subtype 1) (Mycoplasmoides pneumoniae).